The sequence spans 308 residues: Ribonuclease Z (308 aa).

Residues H63, H65, D67, H68, H141, D212, and H270 each coordinate Zn(2+). D67 acts as the Proton acceptor in catalysis.

The protein belongs to the RNase Z family. In terms of assembly, homodimer. Zn(2+) is required as a cofactor.

The enzyme catalyses Endonucleolytic cleavage of RNA, removing extra 3' nucleotides from tRNA precursor, generating 3' termini of tRNAs. A 3'-hydroxy group is left at the tRNA terminus and a 5'-phosphoryl group is left at the trailer molecule.. In terms of biological role, zinc phosphodiesterase, which displays some tRNA 3'-processing endonuclease activity. Probably involved in tRNA maturation, by removing a 3'-trailer from precursor tRNA. The protein is Ribonuclease Z of Pediococcus pentosaceus (strain ATCC 25745 / CCUG 21536 / LMG 10740 / 183-1w).